The sequence spans 273 residues: Bifunctional protein FolD (273 aa).

NADP(+) is bound by residues 155–157 (GRS), S182, and I223.

Belongs to the tetrahydrofolate dehydrogenase/cyclohydrolase family. Homodimer.

The catalysed reaction is (6R)-5,10-methylene-5,6,7,8-tetrahydrofolate + NADP(+) = (6R)-5,10-methenyltetrahydrofolate + NADPH. The enzyme catalyses (6R)-5,10-methenyltetrahydrofolate + H2O = (6R)-10-formyltetrahydrofolate + H(+). It participates in one-carbon metabolism; tetrahydrofolate interconversion. In terms of biological role, catalyzes the oxidation of 5,10-methylenetetrahydrofolate to 5,10-methenyltetrahydrofolate and then the hydrolysis of 5,10-methenyltetrahydrofolate to 10-formyltetrahydrofolate. The chain is Bifunctional protein FolD from Pseudothermotoga lettingae (strain ATCC BAA-301 / DSM 14385 / NBRC 107922 / TMO) (Thermotoga lettingae).